The following is a 251-amino-acid chain: Elongator complex protein 6 (251 aa).

The protein belongs to the ELP6 family. Component of the elongator complex composed of Elp1, Elp2, Elp3, Elp4, Elp5 and Elp6. The elongator complex associates with and stabilizes microtubules; efficient interaction requires the full complex. Interacts with InR/Insulin-like receptor; the interaction may stabilize Elp6.

It is found in the cytoplasm. It localises to the nucleus. Its subcellular location is the cytoskeleton. The protein resides in the spindle. Its pathway is tRNA modification; 5-methoxycarbonylmethyl-2-thiouridine-tRNA biosynthesis. Its function is as follows. Component of the elongator complex, which is required for multiple tRNA modifications, including mcm5U (5-methoxycarbonylmethyl uridine), mcm5s2U (5-methoxycarbonylmethyl-2-thiouridine), and ncm5U (5-carbamoylmethyl uridine). The elongator complex catalyzes formation of carboxymethyluridine in the wobble base at position 34 in tRNAs. Binding by the elongator complex stabilizes microtubules and promotes their growth. This induces central spindle asymmetry, promoting polarized signaling endosome trafficking during asymmetric cell division and cell fate assignation of sensory organ precursor cells. Required in germ line cells for microtubule organization involved in oocyte polarization and chromosome organization. Involved in InR-TOR (insulin-like receptor-target of rapamycin) signaling regulation of cellular metabolism, autophagy and apoptosis. The protein is Elongator complex protein 6 of Drosophila melanogaster (Fruit fly).